The primary structure comprises 264 residues: 3-methyl-2-oxobutanoate hydroxymethyltransferase (264 aa).

2 residues coordinate Mg(2+): aspartate 45 and aspartate 84. 3-methyl-2-oxobutanoate-binding positions include 45–46 (DS), aspartate 84, and lysine 112. A Mg(2+)-binding site is contributed by glutamate 114. Glutamate 181 (proton acceptor) is an active-site residue.

The protein belongs to the PanB family. In terms of assembly, homodecamer; pentamer of dimers. The cofactor is Mg(2+).

It localises to the cytoplasm. The enzyme catalyses 3-methyl-2-oxobutanoate + (6R)-5,10-methylene-5,6,7,8-tetrahydrofolate + H2O = 2-dehydropantoate + (6S)-5,6,7,8-tetrahydrofolate. It participates in cofactor biosynthesis; (R)-pantothenate biosynthesis; (R)-pantoate from 3-methyl-2-oxobutanoate: step 1/2. Functionally, catalyzes the reversible reaction in which hydroxymethyl group from 5,10-methylenetetrahydrofolate is transferred onto alpha-ketoisovalerate to form ketopantoate. The polypeptide is 3-methyl-2-oxobutanoate hydroxymethyltransferase (Escherichia coli O157:H7).